The following is a 465-amino-acid chain: Putative multidrug resistance protein MdtD (465 aa).

The next 12 helical transmembrane spans lie at 12–32, 49–69, 72–92, 138–158, 165–185, 195–215, 219–239, 267–287, 290–310, 329–351, 393–413, and 430–450; these read LWIV…VNTA, SVIV…GWLA, IGVK…SLMC, FVTL…GFLV, WIFL…LLLM, FDIS…LALD, GLGL…IALG, LVGS…TPIF, IGLG…IIGS, VLVN…AIMG, LLSM…GILL, and SAFL…ALIF.

Belongs to the major facilitator superfamily. TCR/Tet family.

The protein localises to the cell inner membrane. The chain is Putative multidrug resistance protein MdtD from Yersinia pseudotuberculosis serotype I (strain IP32953).